Here is a 106-residue protein sequence, read N- to C-terminus: PAT complex subunit Asterix (106 aa).

Over residues 1–10 (MSANSMSDPR) the composition is skewed to polar residues. Residues 1–29 (MSANSMSDPRSPNKVLRYKPPPSECNPAL) form a disordered region. At serine 2 the chain carries N-acetylserine. Over 2–32 (SANSMSDPRSPNKVLRYKPPPSECNPALDDP) the chain is Cytoplasmic. A helical transmembrane segment spans residues 33–51 (TPDYMNLLGMIFSMCGLML). Lysine 52 is a topological domain (lumenal). The chain crosses the membrane as a helical span at residues 53–70 (LKWCAWVAVYCSFISFAN). Over 71–74 (SRSS) the chain is Cytoplasmic. The chain crosses the membrane as a helical span at residues 75 to 95 (EDTKQMMSSFMLSISAVVMSY). Topologically, residues 96–106 (LQNPQPMTPPW) are lumenal.

It belongs to the Asterix family. As to quaternary structure, component of the PAT complex, composed of WDR83OS/Asterix and CCDC47. The PAT complex is part of the multi-pass translocon (MPT) complex, composed of three subcomplexes, the GEL complex (composed of RAB5IF/OPTI and TMCO1), the BOS complex (composed of NCLN/Nicalin, NOMO1 and TMEM147) and the PAT complex (composed of WDR83OS/Asterix and CCDC47). The MPT complex associates with the SEC61 complex.

The protein localises to the endoplasmic reticulum membrane. Component of the multi-pass translocon (MPT) complex that mediates insertion of multi-pass membrane proteins into the lipid bilayer of membranes. The MPT complex takes over after the SEC61 complex: following membrane insertion of the first few transmembrane segments of proteins by the SEC61 complex, the MPT complex occludes the lateral gate of the SEC61 complex to promote insertion of subsequent transmembrane regions. Within the MPT complex, the PAT subcomplex sequesters any highly polar regions in the transmembrane domains away from the non-polar membrane environment until they can be buried in the interior of the fully assembled protein. Within the PAT subcomplex, WDR83OS/Asterix binds to and redirects the substrate to a location behind the SEC61 complex. The protein is PAT complex subunit Asterix (WDR83OS) of Sus scrofa (Pig).